We begin with the raw amino-acid sequence, 228 residues long: Eukaryotic translation initiation factor 4E-2 (228 aa).

Residues Cys-130 and Cys-134 are joined by a disulfide bond.

The protein belongs to the eukaryotic initiation factor 4E family. EIF4F is a multi-subunit complex, the composition of which varies with external and internal environmental conditions. It is composed of at least eIF4A, eIF4E and eIF4G. eIF4E is also known to interact with other partners. Highly expressed in all somatic tissues.

In terms of biological role, recognizes and binds the 7-methylguanosine-containing mRNA cap during an early step in the initiation of protein synthesis and facilitates ribosome binding by inducing the unwinding of the mRNAs secondary structures. All 5 eIF4E proteins bind monomethyl cap structures. Only ife-1, ife-2 and ife-5 bind trimethyl cap structures which result from trans-splicing. Translation of trimethyl cap structure mRNAs may be regulated by intracellular redox state; disulfide bonds change the width and depth of the cap-binding cavity determining selectivity to mRNA caps. Probably by regulating mRNA translation in somatic cells, negatively regulates lifespan independently of daf-2/insulin and let-363/TOR pathways. Negatively regulates resistance to oxidative stress. May play a role in embryonic development. The protein is Eukaryotic translation initiation factor 4E-2 (ife-2) of Caenorhabditis elegans.